The primary structure comprises 967 residues: Vitamin B12-dependent ribonucleotide reductase (967 aa).

The tract at residues 1–23 (MTETASGPARSSRAKGTKAGKGL) is disordered. Residues Ser-143, 159–160 (AC), Gly-188, 364–368 (NPCSE), and 554–558 (PTGTI) contribute to the substrate site. An intrachain disulfide couples Cys-160 to Cys-377. Asn-364 acts as the Proton acceptor in catalysis. The active-site Cysteine radical intermediate is the Cys-366. The active-site Proton acceptor is the Glu-368.

This sequence belongs to the ribonucleoside diphosphate reductase class-2 family. Adenosylcob(III)alamin serves as cofactor.

It catalyses the reaction a 2'-deoxyribonucleoside 5'-diphosphate + [thioredoxin]-disulfide + H2O = a ribonucleoside 5'-diphosphate + [thioredoxin]-dithiol. Catalyzes the reduction of ribonucleotides to deoxyribonucleotides. May function to provide a pool of deoxyribonucleotide precursors for DNA repair during oxygen limitation and/or for immediate growth after restoration of oxygen. The chain is Vitamin B12-dependent ribonucleotide reductase (nrdJ) from Streptomyces coelicolor (strain ATCC BAA-471 / A3(2) / M145).